A 135-amino-acid polypeptide reads, in one-letter code: Small ribosomal subunit protein uS12 (135 aa).

Aspartate 89 is modified (3-methylthioaspartic acid). The disordered stretch occupies residues 106-135; sequence GVKDRKQGRSKYGAKRPKPGQAPAAAGKKK. Residues 113-123 show a composition bias toward basic residues; the sequence is GRSKYGAKRPK. Positions 124–135 are enriched in low complexity; that stretch reads PGQAPAAAGKKK.

Belongs to the universal ribosomal protein uS12 family. Part of the 30S ribosomal subunit. Contacts proteins S8 and S17. May interact with IF1 in the 30S initiation complex.

With S4 and S5 plays an important role in translational accuracy. Functionally, interacts with and stabilizes bases of the 16S rRNA that are involved in tRNA selection in the A site and with the mRNA backbone. Located at the interface of the 30S and 50S subunits, it traverses the body of the 30S subunit contacting proteins on the other side and probably holding the rRNA structure together. The combined cluster of proteins S8, S12 and S17 appears to hold together the shoulder and platform of the 30S subunit. The sequence is that of Small ribosomal subunit protein uS12 from Synechococcus sp. (strain JA-3-3Ab) (Cyanobacteria bacterium Yellowstone A-Prime).